The following is a 534-amino-acid chain: Thromboxane-A synthase (534 aa).

Residues 1–10 (MEVLGFLSPE) are Cytoplasmic-facing. Residues 11-31 (LNGPMVTMALAVVLLALLKWY) form a helical membrane-spanning segment. Residues 32 to 75 (STSAFSRLEKLGIRHPKPSPFIGNLTFFRQGFWESHMELRKQYG) lie on the Lumenal side of the membrane. A helical transmembrane segment spans residues 76 to 96 (PLSGYYLGRRMIVVISDPDMI). Residues 97 to 223 (KQVLAEKFSN…RRFFAFSVPR (127 aa)) are Cytoplasmic-facing. The chain crosses the membrane as a helical span at residues 224-244 (LILVLILSFPSIMVPLARILP). The Lumenal segment spans residues 245–336 (NKKRDEVNGF…LTVDEVVGQA (92 aa)). The chain crosses the membrane as a helical span at residues 337-357 (FLFLIAGYEIITNTLSFVTYL). The Cytoplasmic portion of the chain corresponds to 358–534 (LATNPDCQEK…NGVYIRIVPR (177 aa)). Cys-480 contributes to the heme binding site.

Belongs to the cytochrome P450 family. In terms of assembly, monomer. Heme serves as cofactor. In terms of tissue distribution, expressed in lung, kidney and thymus.

The protein localises to the endoplasmic reticulum membrane. It carries out the reaction prostaglandin H2 = thromboxane A2. It catalyses the reaction prostaglandin H2 = (12S)-hydroxy-(5Z,8E,10E)-heptadecatrienoate + malonaldehyde. The catalysed reaction is a hydroperoxyeicosatetraenoate = an oxoeicosatetraenoate + H2O. The enzyme catalyses (15S)-hydroperoxy-(5Z,8Z,11Z,13E)-eicosatetraenoate = 15-oxo-(5Z,8Z,11Z,13E)-eicosatetraenoate + H2O. It carries out the reaction (15S)-hydroperoxy-(5Z,8Z,11Z,13E)-eicosatetraenoate + AH2 = (15S)-hydroxy-(5Z,8Z,11Z,13E)-eicosatetraenoate + A + H2O. In terms of biological role, catalyzes the conversion of prostaglandin H2 (PGH2) to thromboxane A2 (TXA2), a potent inducer of blood vessel constriction and platelet aggregation. Also cleaves PGH2 to 12-hydroxy-heptadecatrienoicacid (12-HHT) and malondialdehyde, which is known to act as a mediator of DNA damage. 12-HHT and malondialdehyde are formed stoichiometrically in the same amounts as TXA2. Additionally, displays dehydratase activity, toward (15S)-hydroperoxy-(5Z,8Z,11Z,13E)-eicosatetraenoate (15(S)-HPETE) producing 15-KETE and 15-HETE. This is Thromboxane-A synthase (TBXAS1) from Sus scrofa (Pig).